Reading from the N-terminus, the 612-residue chain is Phosphoenolpyruvate carboxykinase [GTP] (612 aa).

Substrate-binding positions include arginine 82 and 221–223 (YGG). Lysine 230 and histidine 250 together coordinate Mn(2+). Serine 272 contributes to the substrate binding site. 273-278 (ACGKTN) serves as a coordination point for GTP. Cysteine 274 is a catalytic residue. Position 297 (aspartate 297) interacts with Mn(2+). 388–390 (NSR) lines the substrate pocket. GTP is bound by residues arginine 390, arginine 421, and 516 to 519 (FGEN).

Belongs to the phosphoenolpyruvate carboxykinase [GTP] family. In terms of assembly, monomer. The cofactor is Mn(2+).

The protein resides in the cytoplasm. It carries out the reaction oxaloacetate + GTP = phosphoenolpyruvate + GDP + CO2. It participates in carbohydrate biosynthesis; gluconeogenesis. Its function is as follows. Catalyzes the conversion of oxaloacetate (OAA) to phosphoenolpyruvate (PEP), the rate-limiting step in the metabolic pathway that produces glucose from lactate and other precursors derived from the citric acid cycle. The protein is Phosphoenolpyruvate carboxykinase [GTP] of Corynebacterium efficiens (strain DSM 44549 / YS-314 / AJ 12310 / JCM 11189 / NBRC 100395).